We begin with the raw amino-acid sequence, 876 residues long: DNA mismatch repair protein MutS (876 aa).

626–633 (GPNMAGKS) lines the ATP pocket. Positions 829 to 856 (FRAAPPPPAPAAPPKASQVEERLRAIQP) are disordered. Over residues 832 to 841 (APPPPAPAAP) the composition is skewed to pro residues.

Belongs to the DNA mismatch repair MutS family.

Functionally, this protein is involved in the repair of mismatches in DNA. It is possible that it carries out the mismatch recognition step. This protein has a weak ATPase activity. This is DNA mismatch repair protein MutS from Cereibacter sphaeroides (strain ATCC 17025 / ATH 2.4.3) (Rhodobacter sphaeroides).